A 530-amino-acid polypeptide reads, in one-letter code: Hyalin (530 aa).

7 HYR domains span residues 1–66, 67–150, 151–234, 235–319, 320–403, 404–486, and 487–530; these read NVEI…TVTA, TDSI…NVVE, VDTT…NVVE, VDTT…NIVE, EDTT…TVNT, and VDTT…ASLV.

As to quaternary structure, homooligomer in presence of calcium. Post-translationally, glycosylated.

The protein resides in the secreted. The protein localises to the extracellular space. It is found in the extracellular matrix. Its function is as follows. Major constituent of the hyaline layer. The hyaline layer of echinoderm embryos is an extraembryonic matrix that functions as a substrate for cell adhesion through early development. The chain is Hyalin from Lytechinus variegatus (Green sea urchin).